Consider the following 339-residue polypeptide: DNA-directed RNA polymerase subunit alpha (339 aa).

Residues 1 to 233 (MVREEITGST…DLFLPFIHTE (233 aa)) are alpha N-terminal domain (alpha-NTD). Positions 266–339 (GIPLNCIFID…IDLPKNKFSL (74 aa)) are alpha C-terminal domain (alpha-CTD).

Belongs to the RNA polymerase alpha chain family. In terms of assembly, in plastids the minimal PEP RNA polymerase catalytic core is composed of four subunits: alpha, beta, beta', and beta''. When a (nuclear-encoded) sigma factor is associated with the core the holoenzyme is formed, which can initiate transcription.

It is found in the plastid. Its subcellular location is the chloroplast. The enzyme catalyses RNA(n) + a ribonucleoside 5'-triphosphate = RNA(n+1) + diphosphate. In terms of biological role, DNA-dependent RNA polymerase catalyzes the transcription of DNA into RNA using the four ribonucleoside triphosphates as substrates. In Sorghum bicolor (Sorghum), this protein is DNA-directed RNA polymerase subunit alpha.